The chain runs to 210 residues: Pyridoxine/pyridoxamine 5'-phosphate oxidase (210 aa).

Substrate is bound by residues 7–10 and lysine 65; that span reads RQSY. FMN contacts are provided by residues 60 to 65, 75 to 76, arginine 81, lysine 82, and glutamine 104; these read RIVLIK and YT. Substrate contacts are provided by tyrosine 122, arginine 126, and serine 130. FMN contacts are provided by residues 139–140 and tryptophan 182; that span reads QS. 188–190 lines the substrate pocket; sequence RLH. Arginine 192 lines the FMN pocket.

This sequence belongs to the pyridoxamine 5'-phosphate oxidase family. As to quaternary structure, homodimer. The cofactor is FMN.

It carries out the reaction pyridoxamine 5'-phosphate + O2 + H2O = pyridoxal 5'-phosphate + H2O2 + NH4(+). It catalyses the reaction pyridoxine 5'-phosphate + O2 = pyridoxal 5'-phosphate + H2O2. It participates in cofactor metabolism; pyridoxal 5'-phosphate salvage; pyridoxal 5'-phosphate from pyridoxamine 5'-phosphate: step 1/1. The protein operates within cofactor metabolism; pyridoxal 5'-phosphate salvage; pyridoxal 5'-phosphate from pyridoxine 5'-phosphate: step 1/1. Functionally, catalyzes the oxidation of either pyridoxine 5'-phosphate (PNP) or pyridoxamine 5'-phosphate (PMP) into pyridoxal 5'-phosphate (PLP). The protein is Pyridoxine/pyridoxamine 5'-phosphate oxidase of Bordetella petrii (strain ATCC BAA-461 / DSM 12804 / CCUG 43448).